Reading from the N-terminus, the 118-residue chain is Small ribosomal subunit protein uS19c (118 aa).

A disordered region spans residues 92 to 118 (KKSSKKVTKNKKSIKKNIKTTSKKFKK).

Belongs to the universal ribosomal protein uS19 family.

It localises to the plastid. Protein S19 forms a complex with S13 that binds strongly to the 16S ribosomal RNA. This chain is Small ribosomal subunit protein uS19c (rps19), found in Euglena longa (Euglenophycean alga).